Reading from the N-terminus, the 373-residue chain is Mannitol-1-phosphate 5-dehydrogenase (373 aa).

3–14 lines the NAD(+) pocket; sequence ALHFGAGNIGRG.

Belongs to the mannitol dehydrogenase family.

It carries out the reaction D-mannitol 1-phosphate + NAD(+) = beta-D-fructose 6-phosphate + NADH + H(+). In Bacillus subtilis (strain 168), this protein is Mannitol-1-phosphate 5-dehydrogenase (mtlD).